Here is a 156-residue protein sequence, read N- to C-terminus: Small ribosomal subunit protein uS7 (156 aa).

It belongs to the universal ribosomal protein uS7 family. In terms of assembly, part of the 30S ribosomal subunit. Contacts proteins S9 and S11.

Its function is as follows. One of the primary rRNA binding proteins, it binds directly to 16S rRNA where it nucleates assembly of the head domain of the 30S subunit. Is located at the subunit interface close to the decoding center, probably blocks exit of the E-site tRNA. The sequence is that of Small ribosomal subunit protein uS7 from Neisseria meningitidis serogroup C (strain 053442).